The sequence spans 503 residues: Glucosaminyl-phosphatidylinositol-acyltransferase PIGW (503 aa).

Residues 1–21 (MSQKQMKEAFVSNQNGTSVLE) are Lumenal-facing. N-linked (GlcNAc...) asparagine glycosylation is present at Asn-15. A helical transmembrane segment spans residues 22–42 (ITEGLCLPALCILCRGLLIIL). At 43-56 (SQQLCSSLHNSRTR) the chain is on the cytoplasmic side. Residues 57 to 75 (FLVDFAFLIVPLVTTLTIF) form a helical membrane-spanning segment. At 76–78 (SSF) the chain is on the lumenal side. A helical transmembrane segment spans residues 79–98 (VLLEYLVAIILGAGLLYEIY). The Cytoplasmic portion of the chain corresponds to 99 to 131 (CRRTCYARMPFQKICEKFLKVSLESEHIPAISC). Residues 132–152 (FRVVNSAFTAVAILAVDFPLF) form a helical membrane-spanning segment. Residues 153–160 (PRRYAKTE) are Lumenal-facing. Residues 161-181 (LYGTGAMDYGVGGFIFGSAMV) form a helical membrane-spanning segment. At 182 to 201 (SPEVRRKYTKGSRFCYLTKS) the chain is on the cytoplasmic side. The helical transmembrane segment at 202–222 (LYSLWPLVFLGVGRLVAIKSV) threads the bilayer. Topologically, residues 223 to 236 (DYQEHLTEYGVHWN) are lumenal. The helical transmembrane segment at 237 to 257 (FFFTLIAVKLITSLLLLICPL) threads the bilayer. The Cytoplasmic portion of the chain corresponds to 258-259 (NR). The helical transmembrane segment at 260–280 (SWVVAISIAALYQLALDFTPL) threads the bilayer. Residues 281–304 (KSLILYGTDGSGTRVGLLNANREG) lie on the Lumenal side of the membrane. The chain crosses the membrane as a helical span at residues 305–325 (IISVLGYVAVHMAGVQTGLYV). Residues 326–337 (LKKRSHIKDWIK) are Cytoplasmic-facing. The chain crosses the membrane as a helical span at residues 338-358 (VACCILLTAIGLFISLYIVQV). Residues 359 to 369 (NVEVASRRMAN) lie on the Lumenal side of the membrane. A helical membrane pass occupies residues 370–390 (LAFCIWIVASCLILLSSLLLG). Topologically, residues 391–447 (DIILSFAKFVIKEAAVPCSWKLIQSPTANKKHLESIVFDAKRKEPTLCLITAMNRNQ) are cytoplasmic. At Ser-415 the chain carries Phosphoserine. Residues 448 to 468 (LLFFLLSNVTTGLVNLSIDTL) form a helical membrane-spanning segment. The Lumenal portion of the chain corresponds to 469–472 (HSST). A helical transmembrane segment spans residues 473 to 493 (PWALCLLNLYMFTNCLIIYVL). Residues 494-503 (HLQDKTIKFW) are Cytoplasmic-facing.

The protein belongs to the PIGW family.

The protein resides in the endoplasmic reticulum membrane. Its pathway is glycolipid biosynthesis; glycosylphosphatidylinositol-anchor biosynthesis. In terms of biological role, acyltransferase that catalyzes the acyl transfer from an acyl-CoA at the 2-OH position of the inositol ring of glucosaminyl phosphatidylinositol (GlcN-PI) to generate glucosaminyl acyl phosphatidylinositol (GlcN-(acyl)PI) and participates in the fourth step of GPI-anchor biosynthesis. Required for the transport of GPI-anchored proteins to the plasma membrane. Acetylation during GPI-anchor biosynthesis is not essential for the subsequent mannosylation and is usually removed soon after the attachment of GPIs to proteins. The protein is Glucosaminyl-phosphatidylinositol-acyltransferase PIGW of Bos taurus (Bovine).